A 300-amino-acid chain; its full sequence is Glycine--tRNA ligase alpha subunit (300 aa).

The protein belongs to the class-II aminoacyl-tRNA synthetase family. Tetramer of two alpha and two beta subunits.

The protein localises to the cytoplasm. It catalyses the reaction tRNA(Gly) + glycine + ATP = glycyl-tRNA(Gly) + AMP + diphosphate. The sequence is that of Glycine--tRNA ligase alpha subunit (glyQ) from Buchnera aphidicola subsp. Baizongia pistaciae (strain Bp).